We begin with the raw amino-acid sequence, 715 residues long: DNA-directed RNA polymerase subunit beta' (715 aa).

Zn(2+)-binding residues include Cys-69, Cys-71, Cys-87, and Cys-90. Positions Ala-244–Gln-272 are disordered. Residues Asp-520, Asp-522, and Asp-524 each coordinate Mg(2+).

The protein belongs to the RNA polymerase beta' chain family. RpoC1 subfamily. As to quaternary structure, in plastids the minimal PEP RNA polymerase catalytic core is composed of four subunits: alpha, beta, beta', and beta''. When a (nuclear-encoded) sigma factor is associated with the core the holoenzyme is formed, which can initiate transcription. Mg(2+) serves as cofactor. It depends on Zn(2+) as a cofactor.

The protein resides in the plastid. It localises to the chloroplast. The catalysed reaction is RNA(n) + a ribonucleoside 5'-triphosphate = RNA(n+1) + diphosphate. DNA-dependent RNA polymerase catalyzes the transcription of DNA into RNA using the four ribonucleoside triphosphates as substrates. The polypeptide is DNA-directed RNA polymerase subunit beta' (Zygnema circumcarinatum (Green alga)).